The following is a 91-amino-acid chain: Small ribosomal subunit protein bS18 (91 aa).

It belongs to the bacterial ribosomal protein bS18 family. Part of the 30S ribosomal subunit. Forms a tight heterodimer with protein bS6.

In terms of biological role, binds as a heterodimer with protein bS6 to the central domain of the 16S rRNA, where it helps stabilize the platform of the 30S subunit. The protein is Small ribosomal subunit protein bS18 of Paraburkholderia phymatum (strain DSM 17167 / CIP 108236 / LMG 21445 / STM815) (Burkholderia phymatum).